We begin with the raw amino-acid sequence, 286 residues long: MIDFLDVQKETPRIRIAIDRVGVKNIKFPLKIHDDFAFLTLNLFVDVPADRKGADMSRAVESIQKVINAGSYGERIGDIGIAICDEALSRFNYSEKAQCEVNIQYYRRSGERYLEYRMYVETAKDRKQIMKNEIGISYVTMTACPCAMETTRALISMDNPDISDAISAIPTITHNQRNVTKLTVDNRSKMITVWDLADVMERVQGKPLDSLLKRVEEGRLVYSAHRNPKFVEDVVREIAYEAARVLGVPDEATIKVSSESDESIHPHNAYAEIDTTAGELRKLHLH.

This sequence belongs to the GTP cyclohydrolase IV family. In terms of assembly, homodimer. The cofactor is Fe(2+).

It catalyses the reaction GTP + H2O = 7,8-dihydroneopterin 2',3'-cyclic phosphate + formate + diphosphate + H(+). Its pathway is cofactor biosynthesis; 5,6,7,8-tetrahydromethanopterin biosynthesis. In terms of biological role, converts GTP to 7,8-dihydro-D-neopterin 2',3'-cyclic phosphate, the first intermediate in the biosynthesis of coenzyme methanopterin. This is GTP cyclohydrolase MptA from Thermoplasma acidophilum (strain ATCC 25905 / DSM 1728 / JCM 9062 / NBRC 15155 / AMRC-C165).